The following is a 56-amino-acid chain: uncharacterized protein (56 aa).

This is an uncharacterized protein from Orgyia pseudotsugata (Douglas-fir tussock moth).